We begin with the raw amino-acid sequence, 777 residues long: Lon protease (777 aa).

Positions 11 to 204 constitute a Lon N-terminal domain; the sequence is IPVLPLRDVV…FLMAIMETEI (194 aa). ATP is bound at residue 356 to 363; sequence GPPGVGKT. The region spanning 592–773 is the Lon proteolytic domain; sequence LNQIGQVVGL…EEVLKIALEN (182 aa). Catalysis depends on residues serine 679 and lysine 722.

Belongs to the peptidase S16 family. Homohexamer. Organized in a ring with a central cavity.

Its subcellular location is the cytoplasm. It catalyses the reaction Hydrolysis of proteins in presence of ATP.. Its function is as follows. ATP-dependent serine protease that mediates the selective degradation of mutant and abnormal proteins as well as certain short-lived regulatory proteins. Required for cellular homeostasis and for survival from DNA damage and developmental changes induced by stress. Degrades polypeptides processively to yield small peptide fragments that are 5 to 10 amino acids long. Binds to DNA in a double-stranded, site-specific manner. This is Lon protease from Buchnera aphidicola subsp. Schizaphis graminum (strain Sg).